An 81-amino-acid chain; its full sequence is Large ribosomal subunit protein uL23 (81 aa).

This sequence belongs to the universal ribosomal protein uL23 family. In terms of assembly, part of the 50S ribosomal subunit. Contacts protein L29.

Binds to 23S rRNA. One of the proteins that surrounds the polypeptide exit tunnel on the outside of the ribosome. The chain is Large ribosomal subunit protein uL23 from Pyrobaculum aerophilum (strain ATCC 51768 / DSM 7523 / JCM 9630 / CIP 104966 / NBRC 100827 / IM2).